The chain runs to 423 residues: Gamma-glutamyl phosphate reductase (423 aa).

Belongs to the gamma-glutamyl phosphate reductase family.

It is found in the cytoplasm. The catalysed reaction is L-glutamate 5-semialdehyde + phosphate + NADP(+) = L-glutamyl 5-phosphate + NADPH + H(+). Its pathway is amino-acid biosynthesis; L-proline biosynthesis; L-glutamate 5-semialdehyde from L-glutamate: step 2/2. Its function is as follows. Catalyzes the NADPH-dependent reduction of L-glutamate 5-phosphate into L-glutamate 5-semialdehyde and phosphate. The product spontaneously undergoes cyclization to form 1-pyrroline-5-carboxylate. The chain is Gamma-glutamyl phosphate reductase from Pseudomonas putida (strain ATCC 47054 / DSM 6125 / CFBP 8728 / NCIMB 11950 / KT2440).